Consider the following 169-residue polypeptide: Sulfopyruvate decarboxylase subunit alpha (169 aa).

It belongs to the ComD family. In terms of assembly, heterododecamer composed of 6 subunits alpha and 6 subunits beta.

It catalyses the reaction 3-sulfopyruvate + H(+) = sulfoacetaldehyde + CO2. It functions in the pathway cofactor biosynthesis; coenzyme M biosynthesis; sulfoacetaldehyde from phosphoenolpyruvate and sulfite: step 4/4. Inhibited by oxygen when heated in air at 80 degrees Celsius. The enzyme is reactivated by addition of dithionite. Its function is as follows. Involved in the biosynthesis of the coenzyme M (2-mercaptoethanesulfonic acid). Catalyzes the decarboxylation of sulfopyruvate to sulfoacetaldehyde. The polypeptide is Sulfopyruvate decarboxylase subunit alpha (Methanocaldococcus jannaschii (strain ATCC 43067 / DSM 2661 / JAL-1 / JCM 10045 / NBRC 100440) (Methanococcus jannaschii)).